The chain runs to 279 residues: Putative hydroxypyruvate isomerase (279 aa).

Active-site proton donor/acceptor residues include Glu155 and Glu256. A disordered region spans residues 260–279; that stretch reads GDDPSAQSFSWLPAGARAAR.

Belongs to the hyi family.

It catalyses the reaction 3-hydroxypyruvate = 2-hydroxy-3-oxopropanoate. Catalyzes the reversible isomerization between hydroxypyruvate and 2-hydroxy-3-oxopropanoate (also termed tartronate semialdehyde). This chain is Putative hydroxypyruvate isomerase, found in Streptomyces coelicolor (strain ATCC BAA-471 / A3(2) / M145).